Consider the following 816-residue polypeptide: Neuronal PAS domain-containing protein 2 (816 aa).

Over residues 1-10 the composition is skewed to basic and acidic residues; it reads MDEDEKDRAK. The interval 1 to 21 is disordered; that stretch reads MDEDEKDRAKRASRNKSEKKR. The tract at residues 1–61 is sufficient for heterodimer formation with BMAL1, E-box binding and for the effect of NADPH; the sequence is MDEDEKDRAK…VIGFLQKHNE (61 aa). The region spanning 9-59 is the bHLH domain; it reads AKRASRNKSEKKRRDQFNVLIKELSSMLPGNTRKMDKTTVLEKVIGFLQKH. Positions 82 to 152 constitute a PAS 1 domain; that stretch reads NEEFTQLMLE…KILSSHMLVT (71 aa). 2 residues coordinate heme b: H119 and H171. The PAS 2 domain maps to 237 to 307; sequence FLKEMCVADE…RCHQHLMQFG (71 aa). Residues 311 to 354 enclose the PAC domain; the sequence is SCCYRFLTKGQQWIWLQTHYYITYHQWNSKPEFIVCTHSVVSYA. Disordered regions lie at residues 364–431, 610–639, 685–705, and 742–816; these read LALE…STPT, ISAQ…SQFS, QPMM…RTGR, and PSFP…LSES. Positions 400-413 are enriched in low complexity; the sequence is SGLPSSPSPSASSR. The span at 420–431 shows a compositional bias: polar residues; the sequence is HTAMSEPTSTPT. Residues 623-639 are compositionally biased toward low complexity; that stretch reads LLPASGRSLSSLPSQFS. The segment covering 745–759 has biased composition (low complexity); that stretch reads PASRPSPLQPAQAQQ. The span at 780-789 shows a compositional bias: polar residues; sequence LLSTFSQQPG. Positions 806–816 are enriched in basic residues; it reads PSRRVSRLSES.

In terms of assembly, component of the circadian clock oscillator which includes the CRY proteins, CLOCK or NPAS2, BMAL1 or BMAL2, CSNK1D and/or CSNK1E, TIMELESS and the PER proteins. Efficient DNA binding requires dimerization with another bHLH protein. Interacts with NCOA3, KAT2B and CREBBP. Forms a heterodimer with BMAL1 and this heterodimerization is required for E-box-dependent transactivation. Interacts with EP300. It depends on heme as a cofactor. Expressed in the retinal ganglion cells (at protein level). Expressed in the hypothalamic suprachiasmatic nuclei (SCN) of the brain. Also found in spinal cord, and to a lesser extent in colon, small intestine and uterus. Exhibits a diurnal variation in its expression in the brain.

The protein resides in the nucleus. Carbon monoxide (CO) and the redox state of the cell can modulate the transcriptional activity of the NPAS2-BMAL1 heterodimer. NADH and NADPH enhance the DNA-binding activity of the heterodimer whereas CO binds the heme group in NPAS2 and inhibits the DNA-binding activity of the heterodimer. Its function is as follows. Transcriptional activator which forms a core component of the circadian clock. The circadian clock, an internal time-keeping system, regulates various physiological processes through the generation of approximately 24 hour circadian rhythms in gene expression, which are translated into rhythms in metabolism and behavior. It is derived from the Latin roots 'circa' (about) and 'diem' (day) and acts as an important regulator of a wide array of physiological functions including metabolism, sleep, body temperature, blood pressure, endocrine, immune, cardiovascular, and renal function. Consists of two major components: the central clock, residing in the suprachiasmatic nucleus (SCN) of the brain, and the peripheral clocks that are present in nearly every tissue and organ system. Both the central and peripheral clocks can be reset by environmental cues, also known as Zeitgebers (German for 'timegivers'). The predominant Zeitgeber for the central clock is light, which is sensed by retina and signals directly to the SCN. The central clock entrains the peripheral clocks through neuronal and hormonal signals, body temperature and feeding-related cues, aligning all clocks with the external light/dark cycle. Circadian rhythms allow an organism to achieve temporal homeostasis with its environment at the molecular level by regulating gene expression to create a peak of protein expression once every 24 hours to control when a particular physiological process is most active with respect to the solar day. Transcription and translation of core clock components (CLOCK, NPAS2, BMAL1, BMAL2, PER1, PER2, PER3, CRY1 and CRY2) plays a critical role in rhythm generation, whereas delays imposed by post-translational modifications (PTMs) are important for determining the period (tau) of the rhythms (tau refers to the period of a rhythm and is the length, in time, of one complete cycle). A diurnal rhythm is synchronized with the day/night cycle, while the ultradian and infradian rhythms have a period shorter and longer than 24 hours, respectively. Disruptions in the circadian rhythms contribute to the pathology of cardiovascular diseases, cancer, metabolic syndromes and aging. A transcription/translation feedback loop (TTFL) forms the core of the molecular circadian clock mechanism. Transcription factors, CLOCK or NPAS2 and BMAL1 or BMAL2, form the positive limb of the feedback loop, act in the form of a heterodimer and activate the transcription of core clock genes and clock-controlled genes (involved in key metabolic processes), harboring E-box elements (5'-CACGTG-3') within their promoters. The core clock genes: PER1/2/3 and CRY1/2 which are transcriptional repressors form the negative limb of the feedback loop and interact with the CLOCK|NPAS2-BMAL1|BMAL2 heterodimer inhibiting its activity and thereby negatively regulating their own expression. This heterodimer also activates nuclear receptors NR1D1/2 and RORA/B/G, which form a second feedback loop and which activate and repress BMAL1 transcription, respectively. The NPAS2-BMAL1 heterodimer positively regulates the expression of MAOA, F7 and LDHA and modulates the circadian rhythm of daytime contrast sensitivity by regulating the rhythmic expression of adenylate cyclase type 1 (ADCY1) in the retina. NPAS2 plays an important role in sleep homeostasis and in maintaining circadian behaviors in normal light/dark and feeding conditions and in the effective synchronization of feeding behavior with scheduled food availability. Regulates the gene transcription of key metabolic pathways in the liver and is involved in DNA damage response by regulating several cell cycle and DNA repair genes. Controls the circadian rhythm of NR0B2 expression by binding rhythmically to its promoter. Mediates the diurnal variation in the expression of GABARA1 receptor in the brain and contributes to the regulation of anxiety-like behaviors and GABAergic neurotransmission in the ventral striatum. The sequence is that of Neuronal PAS domain-containing protein 2 (Npas2) from Mus musculus (Mouse).